Here is a 446-residue protein sequence, read N- to C-terminus: MKEIEKLKEEYPLLNKLIETEEVLWVNPNMEKYETAIKDSPLSEENVKDAKERLKRFASYIAKVFPETKETKGIIESPLLKIPSMKQALEKNYEQPILGELLLKCDSHLPISGSIKARGGIYEVLKHAEQLALQHGMLTEEDDYSILDSDTCREFFAKYSIAVGSTGNLGLSIGIMSAKLGFNVTVHMSADAKQWKKDLLRSKGVNVIEYEADYSKAVEEGRRQADADPSCYFVDDENSHDLFLGYAVAASRLQKQLEELEIIVDEEHPLFVYLPCGVGGGPGGVAFGLKLLYKDNVHCFFAEPTHSPCMLIGLMTGLHDKIAVQDIGIDNVTDADGLAVGRPSGFVGKTMEPFLSGDYTVSDEELYRLLKELADTENIYLEPSALAGMIGPVRVCKEDAYLQKQQLMEKMQKGTHIVWGTGGSMVPEDVMNGYYKTGEALTILEK.

At K116 the chain carries N6-(pyridoxal phosphate)lysine.

Belongs to the serine/threonine dehydratase family. DsdA subfamily. The cofactor is pyridoxal 5'-phosphate.

The enzyme catalyses D-serine = pyruvate + NH4(+). In Bacillus cereus (strain 03BB102), this protein is Probable D-serine dehydratase.